The sequence spans 277 residues: Probable endonuclease 4 (277 aa).

The Zn(2+) site is built by H67, H107, E142, D176, H179, H211, D224, H226, and E256.

It belongs to the AP endonuclease 2 family. It depends on Zn(2+) as a cofactor.

It carries out the reaction Endonucleolytic cleavage to 5'-phosphooligonucleotide end-products.. Functionally, endonuclease IV plays a role in DNA repair. It cleaves phosphodiester bonds at apurinic or apyrimidinic (AP) sites, generating a 3'-hydroxyl group and a 5'-terminal sugar phosphate. The polypeptide is Probable endonuclease 4 (Akkermansia muciniphila (strain ATCC BAA-835 / DSM 22959 / JCM 33894 / BCRC 81048 / CCUG 64013 / CIP 107961 / Muc)).